We begin with the raw amino-acid sequence, 860 residues long: Leucine--tRNA ligase (860 aa).

The short motif at 42 to 52 is the 'HIGH' region element; the sequence is PYPSGRLHMGH. Positions 619–623 match the 'KMSKS' region motif; that stretch reads KMSKS. Lys622 is an ATP binding site.

The protein belongs to the class-I aminoacyl-tRNA synthetase family.

It is found in the cytoplasm. The catalysed reaction is tRNA(Leu) + L-leucine + ATP = L-leucyl-tRNA(Leu) + AMP + diphosphate. In Cronobacter sakazakii (strain ATCC BAA-894) (Enterobacter sakazakii), this protein is Leucine--tRNA ligase.